Reading from the N-terminus, the 770-residue chain is Glutamate carboxypeptidase 2 homolog (770 aa).

Residues 1 to 25 (MPYVGVGAQTVSTSLTGAPMVKAYI) are Cytoplasmic-facing. Residues 26–42 (AIAASLIFVFCIAALGV) traverse the membrane as a helical; Signal-anchor for type II membrane protein segment. Residues 43 to 770 (HHSERKFNKF…CVVNTLRDVI (728 aa)) are Extracellular-facing. 2 N-linked (GlcNAc...) asparagine glycosylation sites follow: asparagine 175 and asparagine 337. Positions 282–597 (SKKELFKGRT…QYWAELAKTF (316 aa)) are catalytic. Histidine 387 and aspartate 397 together coordinate Zn(2+). Asparagine 417 carries N-linked (GlcNAc...) asparagine glycosylation. Catalysis depends on glutamate 435, which acts as the Nucleophile. Positions 436 and 464 each coordinate Zn(2+). N-linked (GlcNAc...) asparagine glycans are attached at residues asparagine 469, asparagine 546, and asparagine 551. Residue histidine 562 coordinates Zn(2+). Asparagine 579, asparagine 606, and asparagine 630 each carry an N-linked (GlcNAc...) asparagine glycan.

This sequence belongs to the peptidase M28 family. M28B subfamily. It depends on Zn(2+) as a cofactor.

The protein resides in the membrane. It carries out the reaction Release of an unsubstituted, C-terminal glutamyl residue, typically from Ac-Asp-Glu or folylpoly-gamma-glutamates.. The polypeptide is Glutamate carboxypeptidase 2 homolog (Caenorhabditis elegans).